A 147-amino-acid polypeptide reads, in one-letter code: MPHGTLEVVLVSAKGLEDADFLNNMDPYVQLTCRTQDQKSNVAEGMGTTPEWNETFIFTVSEGTTELKAKIFDKDVGTEDDAVGEATIPLEPVFVEGSIPPTAYNVVKDEEYKGEIWVALSFKPSENRSRGMDEESYGGWKNSEASY.

In terms of domain architecture, C2 spans 1–103 (MPHGTLEVVL…FVEGSIPPTA (103 aa)). 5 residues coordinate Ca(2+): Asp-20, Asp-26, Asp-73, Asp-75, and Asp-81. The interval 126–147 (ENRSRGMDEESYGGWKNSEASY) is disordered.

The cofactor is Ca(2+).

Binds to both sense and antisense RNA. Can also bind sheared DNA and dodecamer DNA with a low affinity. Interacts with mesophyll plasmodesmata to mediate its own cell-to-cell transport and potentiate RNA trafficking. May play a role in plant defense signaling. This Arabidopsis thaliana (Mouse-ear cress) protein is 16 kDa phloem protein 2.